Consider the following 514-residue polypeptide: 1,25-dihydroxyvitamin D(3) 24-hydroxylase, mitochondrial (514 aa).

A mitochondrion-targeting transit peptide spans Met-1–Ser-35. Cys-462 is a heme binding site.

The protein belongs to the cytochrome P450 family. Requires heme as cofactor.

It is found in the mitochondrion. The enzyme catalyses calcitriol + 2 reduced [adrenodoxin] + O2 + 2 H(+) = calcitetrol + 2 oxidized [adrenodoxin] + H2O. The catalysed reaction is calcitetrol + 2 reduced [adrenodoxin] + O2 + 2 H(+) = (1S)-1,25-dihydroxy-24-oxocalciol + 2 oxidized [adrenodoxin] + 2 H2O. It carries out the reaction (1S)-1,25-dihydroxy-24-oxocalciol + 2 reduced [adrenodoxin] + O2 + 2 H(+) = (1S)-1,23,25-trihydroxy-24-oxocalciol + 2 oxidized [adrenodoxin] + H2O. It catalyses the reaction (1S)-1,23-dihydroxy-24,25,26,27-tetranorcalciol + 2 reduced [adrenodoxin] + O2 + 2 H(+) = (1S)-1-hydroxy-23-oxo-24,25,26,27-tetranorcalciol + 2 oxidized [adrenodoxin] + 2 H2O. The enzyme catalyses (1S)-1-hydroxy-23-oxo-24,25,26,27-tetranorcalciol + 2 reduced [adrenodoxin] + O2 + H(+) = calcitroate + 2 oxidized [adrenodoxin] + H2O. The catalysed reaction is calcidiol + 2 reduced [adrenodoxin] + O2 + 2 H(+) = secalciferol + 2 oxidized [adrenodoxin] + H2O. It carries out the reaction secalciferol + 2 reduced [adrenodoxin] + O2 + 2 H(+) = 25-hydroxy-24-oxocalciol + 2 oxidized [adrenodoxin] + 2 H2O. It catalyses the reaction 25-hydroxy-24-oxocalciol + 2 reduced [adrenodoxin] + O2 + 2 H(+) = 23S,25-dihydroxy-24-oxocholecalciferol + 2 oxidized [adrenodoxin] + H2O. The enzyme catalyses 20S,23-dihydroxycholecalciferol + 2 reduced [adrenodoxin] + O2 + 2 H(+) = 20S,23,25-trihydroxycholecalciferol + 2 oxidized [adrenodoxin] + H2O. The catalysed reaction is 20S,23-dihydroxycholecalciferol + 2 reduced [adrenodoxin] + O2 + 2 H(+) = 20S,23,24-trihydroxycholecalciferol + 2 oxidized [adrenodoxin] + H2O. It carries out the reaction 20S-hydroxycholecalciferol + 2 reduced [adrenodoxin] + O2 + 2 H(+) = 20S,25-dihydroxycholecalciferol + 2 oxidized [adrenodoxin] + H2O. It catalyses the reaction 20S-hydroxycholecalciferol + 2 reduced [adrenodoxin] + O2 + 2 H(+) = 20S,24S-dihydroxycholecalciferol + 2 oxidized [adrenodoxin] + H2O. The enzyme catalyses 20S-hydroxycholecalciferol + 2 reduced [adrenodoxin] + O2 + 2 H(+) = 20S,24R-dihydroxycholecalciferol + 2 oxidized [adrenodoxin] + H2O. A cytochrome P450 monooxygenase with a key role in vitamin D catabolism and calcium homeostasis. Via C24-oxidation pathway, catalyzes the inactivation of both the vitamin D precursor calcidiol (25-hydroxyvitamin D(3)) and the active hormone calcitriol (1-alpha,25-dihydroxyvitamin D(3)). With initial hydroxylation at C-24 (via C24-oxidation pathway), performs a sequential 6-step oxidation of calcitriol leading to the formation of the biliary metabolite calcitroic acid. Hydroxylates at C-24 or C-25 other vitamin D active metabolites, such as CYP11A1-derived secosteroids 20S-hydroxycholecalciferol and 20S,23-dihydroxycholecalciferol. Mechanistically, uses molecular oxygen inserting one oxygen atom into a substrate, and reducing the second into a water molecule, with two electrons provided by NADPH via FDXR/adrenodoxin reductase and FDX1/adrenodoxin. This chain is 1,25-dihydroxyvitamin D(3) 24-hydroxylase, mitochondrial (Cyp24a1), found in Rattus norvegicus (Rat).